A 416-amino-acid chain; its full sequence is RNA-editing ligase 2, mitochondrial (416 aa).

The transit peptide at 1-17 (MLRRLGVRHFRRTPLLF) directs the protein to the mitochondrion. Residues 29 to 31 (TEI), 56 to 62 (EKVHGAN), Arg-79, Glu-126, Phe-173, and 269 to 271 (KFK) contribute to the ATP site. The active-site N6-AMP-lysine intermediate is Lys-57.

Belongs to the RNA ligase 2 family. Component of the RNA editing complex, a 1600 kDa complex composed of at least 20 proteins.

The protein localises to the mitochondrion. It catalyses the reaction ATP + (ribonucleotide)n-3'-hydroxyl + 5'-phospho-(ribonucleotide)m = (ribonucleotide)n+m + AMP + diphosphate.. RNA editing in kinetoplastid mitochondria inserts and deletes uridylates at multiple sites in pre-mRNAs as directed by guide RNAs. This Trypanosoma brucei brucei (strain 927/4 GUTat10.1) protein is RNA-editing ligase 2, mitochondrial (REL2).